We begin with the raw amino-acid sequence, 93 residues long: Small ribosomal subunit protein uS17 (93 aa).

Belongs to the universal ribosomal protein uS17 family. As to quaternary structure, part of the 30S ribosomal subunit.

Its function is as follows. One of the primary rRNA binding proteins, it binds specifically to the 5'-end of 16S ribosomal RNA. The protein is Small ribosomal subunit protein uS17 of Rhodococcus erythropolis (strain PR4 / NBRC 100887).